The following is a 587-amino-acid chain: MKDTIRQLIQQALDQLTADGTLPAGLTPDIQVENTKDRSHGDFASNIAMMLAKPAGMKPRDLATRLVEALPAHEQLAKVEIAGPGFLNFFQDHIWLAASLDRALADERLGVRKAGPAQRVVIDLSSPNLAKEMHVGHLRSTIIGDAVARVLEFLGDTVIRQNHVGDWGTQFGMLLAYLEEQPVDAQAELHDLEVFYRAAKKRFDESPEFADRARELVVRLQAGDPDCLRLWTRFNEISLSHCQKVYDRLGVKLSMADVKGESAYNDDLAQVVADLTAKGLLTEDNGALCVFLEEFRNAEGNPLPVIVQKAGGGYLYATTDLAAMRYRHNVLHADRALYFVDQRQALHFQQVFEVARRAGFVPADMELEHMGFGTMNGADGRPFKTRDGGTVKLIDLLEEAESRAYALVKERNEQRVERGEEPFDEAQLREIGRVVGIDSVKYADLSKHRTSDYSFNFELMLSFEGNTAPYLLYACTRVASVFRKLGQGREQLGGRIVLEQPQELALAAQLAQFGDLLNNVALKGVPHLLCAYLYELAGLFSSFYEHCPILTAEDPAQKDSRLRLAALTGRTLEQGLELLGLKTLERM.

The 'HIGH' region signature appears at 127–137 (PNLAKEMHVGH).

The protein belongs to the class-I aminoacyl-tRNA synthetase family. As to quaternary structure, monomer.

Its subcellular location is the cytoplasm. The enzyme catalyses tRNA(Arg) + L-arginine + ATP = L-arginyl-tRNA(Arg) + AMP + diphosphate. In Pseudomonas paraeruginosa (strain DSM 24068 / PA7) (Pseudomonas aeruginosa (strain PA7)), this protein is Arginine--tRNA ligase.